The chain runs to 209 residues: Ribonuclease HII (209 aa).

An RNase H type-2 domain is found at 20 to 209; it reads GLVAGVDEAG…VARSLPGACR (190 aa). The a divalent metal cation site is built by aspartate 26, glutamate 27, and aspartate 118.

The protein belongs to the RNase HII family. Mn(2+) is required as a cofactor. Mg(2+) serves as cofactor.

The protein resides in the cytoplasm. The catalysed reaction is Endonucleolytic cleavage to 5'-phosphomonoester.. Its function is as follows. Endonuclease that specifically degrades the RNA of RNA-DNA hybrids. This chain is Ribonuclease HII, found in Verminephrobacter eiseniae (strain EF01-2).